Consider the following 209-residue polypeptide: NAD(P)H-quinone oxidoreductase subunit K 2 (209 aa).

Positions 53, 54, 118, and 149 each coordinate [4Fe-4S] cluster.

The protein belongs to the complex I 20 kDa subunit family. As to quaternary structure, NDH-1 can be composed of about 15 different subunits; different subcomplexes with different compositions have been identified which probably have different functions. The cofactor is [4Fe-4S] cluster.

Its subcellular location is the cellular thylakoid membrane. The catalysed reaction is a plastoquinone + NADH + (n+1) H(+)(in) = a plastoquinol + NAD(+) + n H(+)(out). It catalyses the reaction a plastoquinone + NADPH + (n+1) H(+)(in) = a plastoquinol + NADP(+) + n H(+)(out). Its function is as follows. NDH-1 shuttles electrons from an unknown electron donor, via FMN and iron-sulfur (Fe-S) centers, to quinones in the respiratory and/or the photosynthetic chain. The immediate electron acceptor for the enzyme in this species is believed to be plastoquinone. Couples the redox reaction to proton translocation, and thus conserves the redox energy in a proton gradient. Cyanobacterial NDH-1 also plays a role in inorganic carbon-concentration. The protein is NAD(P)H-quinone oxidoreductase subunit K 2 of Acaryochloris marina (strain MBIC 11017).